The sequence spans 231 residues: Ion-translocating oxidoreductase complex subunit E (231 aa).

Helical transmembrane passes span 18–38, 39–59, 63–83, 86–106, 125–145, and 182–202; these read ALVQ…ATNA, LGLG…ISTL, TPAE…VSAV, LINA…PLIV, ALSA…MFVL, and PFLL…MLAG.

This sequence belongs to the NqrDE/RnfAE family. In terms of assembly, the complex is composed of six subunits: RsxA, RsxB, RsxC, RsxD, RsxE and RsxG.

Its subcellular location is the cell inner membrane. Functionally, part of a membrane-bound complex that couples electron transfer with translocation of ions across the membrane. Required to maintain the reduced state of SoxR. This Escherichia coli O6:H1 (strain CFT073 / ATCC 700928 / UPEC) protein is Ion-translocating oxidoreductase complex subunit E.